Reading from the N-terminus, the 203-residue chain is ATP-dependent Clp protease proteolytic subunit (203 aa).

The active-site Nucleophile is the Ser-107. His-132 is an active-site residue.

It belongs to the peptidase S14 family. In terms of assembly, fourteen ClpP subunits assemble into 2 heptameric rings which stack back to back to give a disk-like structure with a central cavity, resembling the structure of eukaryotic proteasomes.

It is found in the cytoplasm. It carries out the reaction Hydrolysis of proteins to small peptides in the presence of ATP and magnesium. alpha-casein is the usual test substrate. In the absence of ATP, only oligopeptides shorter than five residues are hydrolyzed (such as succinyl-Leu-Tyr-|-NHMec, and Leu-Tyr-Leu-|-Tyr-Trp, in which cleavage of the -Tyr-|-Leu- and -Tyr-|-Trp bonds also occurs).. Its function is as follows. Cleaves peptides in various proteins in a process that requires ATP hydrolysis. Has a chymotrypsin-like activity. Plays a major role in the degradation of misfolded proteins. This is ATP-dependent Clp protease proteolytic subunit from Pelagibacter ubique (strain HTCC1062).